Reading from the N-terminus, the 327-residue chain is Elongation factor P--(R)-beta-lysine ligase (327 aa).

Residue Ser78 to Glu80 participates in substrate binding. ATP-binding positions include Arg102–Gln104 and Asn111. Tyr120 is a substrate binding site. Glu246–Leu247 is an ATP binding site. A substrate-binding site is contributed by Glu253. ATP is bound at residue Gly302.

It belongs to the class-II aminoacyl-tRNA synthetase family. EpmA subfamily. In terms of assembly, homodimer.

It carries out the reaction D-beta-lysine + L-lysyl-[protein] + ATP = N(6)-((3R)-3,6-diaminohexanoyl)-L-lysyl-[protein] + AMP + diphosphate + H(+). Functionally, with EpmB is involved in the beta-lysylation step of the post-translational modification of translation elongation factor P (EF-P). Catalyzes the ATP-dependent activation of (R)-beta-lysine produced by EpmB, forming a lysyl-adenylate, from which the beta-lysyl moiety is then transferred to the epsilon-amino group of a conserved specific lysine residue in EF-P. The polypeptide is Elongation factor P--(R)-beta-lysine ligase (Baumannia cicadellinicola subsp. Homalodisca coagulata).